Here is a 478-residue protein sequence, read N- to C-terminus: Glycogen synthase (478 aa).

K15 serves as a coordination point for ADP-alpha-D-glucose.

It belongs to the glycosyltransferase 1 family. Bacterial/plant glycogen synthase subfamily.

It carries out the reaction [(1-&gt;4)-alpha-D-glucosyl](n) + ADP-alpha-D-glucose = [(1-&gt;4)-alpha-D-glucosyl](n+1) + ADP + H(+). Its pathway is glycan biosynthesis; glycogen biosynthesis. In terms of biological role, synthesizes alpha-1,4-glucan chains using ADP-glucose. This chain is Glycogen synthase, found in Actinobacillus pleuropneumoniae serotype 5b (strain L20).